Reading from the N-terminus, the 273-residue chain is SPRY domain-containing SOCS box protein 4 (273 aa).

The interval 1–34 is disordered; sequence MGQKLSGSLKSVEVREPALRPAKRELRGAEPGRP. Residues 12–34 show a composition bias toward basic and acidic residues; it reads VEVREPALRPAKRELRGAEPGRP. The B30.2/SPRY domain maps to 34–233; the sequence is PARLDQLLDM…MRYINGLDPE (200 aa). The region spanning 234–273 is the SOCS box domain; that stretch reads PLPLMDLCRRSIRSALGRQRLQDISSLPLPQSLKNYLQYQ.

It belongs to the SPSB family. As to quaternary structure, component of the probable ECS(SPSB4) E3 ubiquitin-protein ligase complex which contains CUL5, RNF7/RBX2, Elongin BC complex and SPSB4. Interacts with CUL5; RNF7; ELOB and ELOC. Interacts with MET. Interacts (via B30.2/SPRY domain) with PAWR; this interaction occurs in association with the Elongin BC complex. Interacts with NOS2. Interacts with EPHB2.

The protein localises to the cytoplasm. The protein resides in the cytosol. Its pathway is protein modification; protein ubiquitination. Functionally, substrate recognition component of a SCF-like ECS (Elongin BC-CUL2/5-SOCS-box protein) E3 ubiquitin-protein ligase complex which mediates the ubiquitination and subsequent proteasomal degradation of target proteins. Negatively regulates nitric oxide (NO) production and limits cellular toxicity in activated macrophages by mediating the ubiquitination and proteasomal degradation of NOS2. Acts as a bridge which links NOS2 with the ECS E3 ubiquitin ligase complex components ELOC and CUL5. Diminishes EphB2-dependent cell repulsive responses by mediating the ubiquitination and degradation of EphB2/CTF2. Regulates cellular clock function by mediating the ubiquitin/proteasome-dependent degradation of the circadian transcriptional repressor NR1D1. The chain is SPRY domain-containing SOCS box protein 4 (SPSB4) from Homo sapiens (Human).